A 283-amino-acid polypeptide reads, in one-letter code: Phosphatidylglycerol--prolipoprotein diacylglyceryl transferase (283 aa).

The next 7 helical transmembrane spans lie at 21–41 (LAIR…LWLA), 60–80 (LLFA…VLFY), 95–115 (VWTG…AMLW), 124–144 (FFTI…AGRL), 176–196 (SQLY…NWFI), 203–223 (GAVS…VEYV), and 239–259 (MGQI…VWAF). Arg-143 serves as a coordination point for a 1,2-diacyl-sn-glycero-3-phospho-(1'-sn-glycerol).

It belongs to the Lgt family.

It localises to the cell inner membrane. It carries out the reaction L-cysteinyl-[prolipoprotein] + a 1,2-diacyl-sn-glycero-3-phospho-(1'-sn-glycerol) = an S-1,2-diacyl-sn-glyceryl-L-cysteinyl-[prolipoprotein] + sn-glycerol 1-phosphate + H(+). It functions in the pathway protein modification; lipoprotein biosynthesis (diacylglyceryl transfer). Functionally, catalyzes the transfer of the diacylglyceryl group from phosphatidylglycerol to the sulfhydryl group of the N-terminal cysteine of a prolipoprotein, the first step in the formation of mature lipoproteins. This is Phosphatidylglycerol--prolipoprotein diacylglyceryl transferase from Aliivibrio salmonicida (strain LFI1238) (Vibrio salmonicida (strain LFI1238)).